Consider the following 311-residue polypeptide: CARD domain-containing protein E10 (311 aa).

The 90-residue stretch at 21-110 folds into the CARD domain; that stretch reads IWDVERLCLE…EHLVDLLERA (90 aa). 3 disordered regions span residues 125–181, 203–230, and 243–311; these read ESGA…GGVY, GAGR…GGRD, and IPEP…FFCC. The span at 140 to 152 shows a compositional bias: polar residues; that stretch reads EDNSGYTALLPTN. The span at 252 to 272 shows a compositional bias: gly residues; it reads SGGGGRGGGVRYDAGGDGRLG.

It is found in the host cell membrane. Functionally, activates host NF-kappa-B and JNK pathways. Induces hyperphosphorylation and redistribution of host bcl-10 from the cytoplasm to the plasma membrane. The inhibitory effect of cellular bcl-10 on NF-kappa-B pathway is then overcome allowing NF-kappa-B activation. This chain is CARD domain-containing protein E10 (E10), found in Equus caballus (Horse).